Reading from the N-terminus, the 111-residue chain is Large ribosomal subunit protein uL22 (111 aa).

This sequence belongs to the universal ribosomal protein uL22 family. As to quaternary structure, part of the 50S ribosomal subunit.

This protein binds specifically to 23S rRNA; its binding is stimulated by other ribosomal proteins, e.g. L4, L17, and L20. It is important during the early stages of 50S assembly. It makes multiple contacts with different domains of the 23S rRNA in the assembled 50S subunit and ribosome. Functionally, the globular domain of the protein is located near the polypeptide exit tunnel on the outside of the subunit, while an extended beta-hairpin is found that lines the wall of the exit tunnel in the center of the 70S ribosome. This chain is Large ribosomal subunit protein uL22, found in Clostridium beijerinckii (strain ATCC 51743 / NCIMB 8052) (Clostridium acetobutylicum).